The primary structure comprises 778 residues: Lon protease (778 aa).

The 184-residue stretch at 4–187 (LPVLPLTDAV…LLVGWVRAHL (184 aa)) folds into the Lon N-terminal domain. 346-353 (GPPGVGKT) is an ATP binding site. Residues 581 to 762 (TAVPGVATGL…ADVLALALRP (182 aa)) form the Lon proteolytic domain. Active-site residues include Ser668 and Lys711.

This sequence belongs to the peptidase S16 family. Homohexamer. Organized in a ring with a central cavity.

It is found in the cytoplasm. It catalyses the reaction Hydrolysis of proteins in presence of ATP.. ATP-dependent serine protease that mediates the selective degradation of mutant and abnormal proteins as well as certain short-lived regulatory proteins. Required for cellular homeostasis and for survival from DNA damage and developmental changes induced by stress. Degrades polypeptides processively to yield small peptide fragments that are 5 to 10 amino acids long. Binds to DNA in a double-stranded, site-specific manner. This chain is Lon protease, found in Salinispora arenicola (strain CNS-205).